A 133-amino-acid polypeptide reads, in one-letter code: Putative pre-16S rRNA nuclease (133 aa).

The protein belongs to the YqgF nuclease family.

It is found in the cytoplasm. In terms of biological role, could be a nuclease involved in processing of the 5'-end of pre-16S rRNA. The protein is Putative pre-16S rRNA nuclease of Bordetella bronchiseptica (strain ATCC BAA-588 / NCTC 13252 / RB50) (Alcaligenes bronchisepticus).